The following is a 196-amino-acid chain: Putative NADH dehydrogenase/NAD(P)H nitroreductase SGR_2476 (196 aa).

It belongs to the nitroreductase family. HadB/RutE subfamily. FMN is required as a cofactor.

This chain is Putative NADH dehydrogenase/NAD(P)H nitroreductase SGR_2476, found in Streptomyces griseus subsp. griseus (strain JCM 4626 / CBS 651.72 / NBRC 13350 / KCC S-0626 / ISP 5235).